Reading from the N-terminus, the 264-residue chain is 3-methyl-2-oxobutanoate hydroxymethyltransferase (264 aa).

Asp45 and Asp84 together coordinate Mg(2+). Residues 45 to 46 (DS), Asp84, and Lys112 contribute to the 3-methyl-2-oxobutanoate site. Glu114 is a binding site for Mg(2+). Glu181 (proton acceptor) is an active-site residue.

Belongs to the PanB family. In terms of assembly, homodecamer; pentamer of dimers. Requires Mg(2+) as cofactor.

It is found in the cytoplasm. The catalysed reaction is 3-methyl-2-oxobutanoate + (6R)-5,10-methylene-5,6,7,8-tetrahydrofolate + H2O = 2-dehydropantoate + (6S)-5,6,7,8-tetrahydrofolate. It functions in the pathway cofactor biosynthesis; (R)-pantothenate biosynthesis; (R)-pantoate from 3-methyl-2-oxobutanoate: step 1/2. In terms of biological role, catalyzes the reversible reaction in which hydroxymethyl group from 5,10-methylenetetrahydrofolate is transferred onto alpha-ketoisovalerate to form ketopantoate. The polypeptide is 3-methyl-2-oxobutanoate hydroxymethyltransferase (Aeromonas hydrophila subsp. hydrophila (strain ATCC 7966 / DSM 30187 / BCRC 13018 / CCUG 14551 / JCM 1027 / KCTC 2358 / NCIMB 9240 / NCTC 8049)).